A 409-amino-acid polypeptide reads, in one-letter code: MLRRAQCLLRLHGNGGHSLVSRFRNYATDEGNPKQNPNPNPRAQKPGTKNLPALRNPFAAAQDRTKNSYLTMVEIFQERDVHRRNHVEFIYAALKNMADFGVERDLEVYKALINVMPKGKFIPTNMFQAEFMHYPKQQQCIIDLLEQMEDCGVMPDHEMEAMLLNVFGRQGHPLRKYWRMMYWMPKFKNLSPWPLPDPVPDDTLEMAKLALERMCTVDLRSKITVFETSELKDAIDDTWIVSGMSPEQEKLLREHSRQKALYIEGPFHIWLRNRRINYFTLRADADSEFLSELDERQLDEDDVSHIEVPFFGRAPPRRHNQLGKLRSVHQQDDGTIMAICATGTSTKDSLLSWIRLLEANGNPSIGEVPVLFRFTSEVPAKAEEIEGGASVPATSDNSSQDEHISSRQK.

The transit peptide at 1–26 (MLRRAQCLLRLHGNGGHSLVSRFRNY) directs the protein to the mitochondrion. 2 disordered regions span residues 27 to 53 (ATDE…NLPA) and 383 to 409 (EEIE…SRQK). Basic and acidic residues predominate over residues 400 to 409 (QDEHISSRQK).

Belongs to the ECSIT family. As to quaternary structure, interacts with Traf6. Associates with mitochondrial complex I assembly intermediates during its biogenesis.

The protein localises to the cytoplasm. It localises to the nucleus. It is found in the mitochondrion. Functionally, as part of the MCIA complex, involved in the assembly of the mitochondrial complex I. Involved in the innate immune response; promotes the production of antibacterial peptides. This Drosophila melanogaster (Fruit fly) protein is Evolutionarily conserved signaling intermediate in Toll pathway, mitochondrial.